The sequence spans 56 residues: Small ribosomal subunit protein uS14 (56 aa).

Positions 21, 24, 39, and 42 each coordinate Zn(2+).

This sequence belongs to the universal ribosomal protein uS14 family. Component of the 40S small ribosomal subunit. Zn(2+) serves as cofactor.

It is found in the cytoplasm. The protein localises to the cytosol. It localises to the rough endoplasmic reticulum. Component of the small ribosomal subunit. The ribosome is a large ribonucleoprotein complex responsible for the synthesis of proteins in the cell. This is Small ribosomal subunit protein uS14 (rps29) from Hippocampus comes (Tiger tail seahorse).